The following is a 3079-amino-acid chain: Inhibitory regulator protein IRA2 (3079 aa).

Residues 392–554 form a disordered region; that stretch reads NQNAHQGSSS…RASYDAHKTG (163 aa). A compositionally biased stretch (low complexity) spans 399–416; the sequence is SSSPSSSSPSSPPSSSSS. Residues 417–442 are compositionally biased toward polar residues; that stretch reads DNNNQNIIAKSLSRQLSHHQSYIQQQ. The span at 449-477 shows a compositional bias: low complexity; sequence SSWTTNSQSSTSLSSSTSNSTTTDFSTHT. The span at 488–497 shows a compositional bias: polar residues; it reads DTPTMSNITI. Over residues 498–528 the composition is skewed to low complexity; sequence SASSLLSQTPTPTTQLQQRLNSAAAAAAAAA. The span at 529–546 shows a compositional bias: polar residues; sequence SPSNSTPTGYTAEQQSRA. Residue T635 is modified to Phosphothreonine. Disordered stretches follow at residues 867 to 898, 912 to 935, and 952 to 980; these read FKGS…PLGL, GSST…LSSD, and GPSS…VQRP. 2 stretches are compositionally biased toward low complexity: residues 873-894 and 921-934; these read SLCS…TPVS and NVNS…NLSS. Polar residues predominate over residues 961-980; sequence IPTTLTSPPGTEKSSPVQRP. The 206-residue stretch at 1717 to 1922 folds into the Ras-GAP domain; the sequence is NATHIVVAQL…DRIFRFLAEL (206 aa).

It localises to the cytoplasm. Inhibitory regulator of the Ras-cyclic AMP pathway. Stimulates the GTPase activity of Ras proteins. This Saccharomyces cerevisiae (strain ATCC 204508 / S288c) (Baker's yeast) protein is Inhibitory regulator protein IRA2 (IRA2).